The primary structure comprises 334 residues: UL-16 binding protein 5 (334 aa).

Residues 1–25 (MAAAASPAFLLRLPLLLLLSSWCRT) form the signal peptide. The Extracellular segment spans residues 26 to 223 (GLADPHSLCY…TMSSGTAQPR (198 aa)). An MHC class I alpha-1 like region spans residues 29–117 (DPHSLCYDIT…IQLENYIPKE (89 aa)). The cysteines at positions 50 and 66 are disulfide-linked. The N-linked (GlcNAc...) asparagine glycan is linked to N82. An MHC class I alpha-2 like region spans residues 118 to 210 (PLTLQARMSC…MDSTLEPSAG (93 aa)). An intrachain disulfide couples C127 to C190. Residue G218 is the site of GPI-anchor amidated glycine attachment. Residues 219–334 (TAQPRATATT…YSEPLQVSIS (116 aa)) constitute a propeptide, removed in mature form. Residues 224 to 243 (ATATTLILCCLLIMCLLICS) traverse the membrane as a helical segment. The Cytoplasmic portion of the chain corresponds to 244-334 (RHSLTQSHGH…YSEPLQVSIS (91 aa)).

This sequence belongs to the MHC class I family. Interacts with KLRK1/NKG2D. As to quaternary structure, (Microbial infection) In CMV-infected cells, interacts with the viral glycoprotein UL16; this interaction causes RAET1G retention in the endoplasmic reticulum and cis-Golgi and prevents binding to and activation of KLRK1/NKG2D, providing CMV with an immune evasion mechanism. Post-translationally, the functional form is cleaved C-terminally of the GPI-anchor and yields a 28 kDa protein. As to expression, isoform 1 is highly expressed in colon and in a number of tumor cell lines and highly restricted in normal tissues. Both isoforms are frequently expressed in cell lines derived from epithelial cancers, and in primary breast cancers.

It localises to the cell membrane. Its subcellular location is the endoplasmic reticulum. It is found in the secreted. Functionally, binds and activates the KLRK1/NKG2D receptor, mediating natural killer cell cytotoxicity. In terms of biological role, down-regulates the expression of KLRK1 and stimulates natural killer cells to secrete IFNG. Stimulates natural killer cells to secrete IFNG. The polypeptide is UL-16 binding protein 5 (Homo sapiens (Human)).